Consider the following 502-residue polypeptide: ATP synthase subunit alpha (502 aa).

The segment at 115–136 (VDGLGPIHTTKTRPIESPAPGV) is disordered. 169–176 (GDRQTGKT) contacts ATP.

The protein belongs to the ATPase alpha/beta chains family. In terms of assembly, F-type ATPases have 2 components, CF(1) - the catalytic core - and CF(0) - the membrane proton channel. CF(1) has five subunits: alpha(3), beta(3), gamma(1), delta(1), epsilon(1). CF(0) has three main subunits: a(1), b(2) and c(9-12). The alpha and beta chains form an alternating ring which encloses part of the gamma chain. CF(1) is attached to CF(0) by a central stalk formed by the gamma and epsilon chains, while a peripheral stalk is formed by the delta and b chains.

Its subcellular location is the cell membrane. It carries out the reaction ATP + H2O + 4 H(+)(in) = ADP + phosphate + 5 H(+)(out). Produces ATP from ADP in the presence of a proton gradient across the membrane. The alpha chain is a regulatory subunit. This chain is ATP synthase subunit alpha, found in Bacillus cytotoxicus (strain DSM 22905 / CIP 110041 / 391-98 / NVH 391-98).